The sequence spans 139 residues: Putative pre-16S rRNA nuclease (139 aa).

The protein belongs to the YqgF nuclease family.

The protein resides in the cytoplasm. Its function is as follows. Could be a nuclease involved in processing of the 5'-end of pre-16S rRNA. This Legionella pneumophila (strain Paris) protein is Putative pre-16S rRNA nuclease.